Here is a 664-residue protein sequence, read N- to C-terminus: Sodium/glucose cotransporter 1 (664 aa).

Residues 1 to 24 (MDSSTWSPPATATAEPLQAYERIR) are Extracellular-facing. Residues 25–47 (NAADISVIVIYFVVVMAVGLWAM) form a helical membrane-spanning segment. At 48 to 66 (FSTNRGTVGGFFLAGRSMV) the chain is on the cytoplasmic side. A helical transmembrane segment spans residues 67 to 90 (WWPIGASLFASNIGSGHFVGLAGT). Over 91–95 (GAAAG) the chain is Extracellular. Residues 96 to 117 (IATGGFEWNALILVVLLGWVFV) form a helical membrane-spanning segment. The Cytoplasmic segment spans residues 118 to 139 (PIYIKAGVVTMPEYLRKRFGGQ). Residues 140-169 (RIQVYLSVLSLVLYIFTKISADIFSGAIFI) form a helical membrane-spanning segment. Residues 170–176 (NLALGLD) lie on the Extracellular side of the membrane. A helical membrane pass occupies residues 177–193 (LYLAIFILLAITALYTI). The Cytoplasmic portion of the chain corresponds to 194–202 (TGGLAAVIY). The helical transmembrane segment at 203 to 221 (TDTLQTVIMLLGSFILTGF) threads the bilayer. Over 222-275 (AFHEVGGYSAFVTKYMNAIPTVTSYGNTTVKKECYTPRADSFHIFRDPLKGDLP) the chain is Extracellular. N-linked (GlcNAc...) asparagine glycosylation is present at Asn-248. Intrachain disulfides connect Cys-255/Cys-511, Cys-255/Cys-610, Cys-345/Cys-351, Cys-355/Cys-361, and Cys-517/Cys-522. Residues 276-295 (WPGLIFGLTIISLWYWCTDQ) form a helical membrane-spanning segment. The Cytoplasmic segment spans residues 296-309 (VIVQRCLSAKNMSH). Residues 310–331 (VKAGCIMCGYMKLLPMFLMVMP) form a helical membrane-spanning segment. Residues 332–375 (GMISRILFTEKVACTVPSECEKYCGTKVGCTNIAYPTLVVELMP) lie on the Extracellular side of the membrane. A helical membrane pass occupies residues 376–406 (NGLRGLMLSVMLASLMSSLTSIFNSASTLFT). Topologically, residues 407–422 (MDIYTKIRKKASEKEL) are cytoplasmic. A helical membrane pass occupies residues 423–444 (MIAGRLFMLVLIGVSIAWVPIV). At 445–451 (QSAQSGQ) the chain is on the extracellular side. Residues 452–477 (LFDYIQSITSYLGPPIAAVFLLAIFC) traverse the membrane as a helical segment. Gln-457 contacts D-glucose. The Cytoplasmic portion of the chain corresponds to 478–481 (KRVN). The helical transmembrane segment at 482–504 (EPGAFWGLIIGFLIGVSRMITEF) threads the bilayer. Residues 505 to 525 (AYGTGSCMEPSNCPTIICGVH) are Extracellular-facing. Residues 526–547 (YLYFAIILFVITIIVILAISLF) form a helical membrane-spanning segment. Topologically, residues 548-644 (TKPIADVHLY…TSEKRLWRMV (97 aa)) are cytoplasmic. Residues 645–662 (VNINGIILLAVAVFCHAY) form a helical membrane-spanning segment. The Extracellular segment spans residues 663–664 (FA).

The protein belongs to the sodium:solute symporter (SSF) (TC 2.A.21) family. N-glycosylation is not necessary for the cotransporter function.

Its subcellular location is the apical cell membrane. It carries out the reaction D-glucose(out) + 2 Na(+)(out) = D-glucose(in) + 2 Na(+)(in). It catalyses the reaction D-galactose(out) + 2 Na(+)(out) = D-galactose(in) + 2 Na(+)(in). With respect to regulation, enhanced by the interaction with PDZK1IP1/MAP17; but unlike SLC5A2/SGLT2, PDZK1IP1 is not essential for SLC5A1 transporter activity. Possibly modulated by cholesterol binding. Its function is as follows. Electrogenic Na(+)-coupled sugar symporter that actively transports D-glucose or D-galactose at the plasma membrane, with a Na(+) to sugar coupling ratio of 2:1. Transporter activity is driven by a transmembrane Na(+) electrochemical gradient set by the Na(+)/K(+) pump. Has a primary role in the transport of dietary monosaccharides from enterocytes to blood. Responsible for the absorption of D-glucose or D-galactose across the apical brush-border membrane of enterocytes, whereas basolateral exit is provided by GLUT2. Additionally, functions as a D-glucose sensor in enteroendocrine cells, triggering the secretion of the incretins GCG and GIP that control food intake and energy homeostasis. Together with SGLT2, functions in reabsorption of D-glucose from glomerular filtrate, playing a nonredundant role in the S3 segment of the proximal tubules. Transports D-glucose into endometrial epithelial cells, controlling glycogen synthesis and nutritional support for the embryo as well as the decidual transformation of endometrium prior to conception. Acts as a water channel enabling passive water transport in response to the osmotic gradient created upon sugar and Na(+) uptake. Has high water conductivity comparable to aquaporins and therefore is expected to play an important role in transepithelial water permeability, especially in the small intestine. This Ovis aries (Sheep) protein is Sodium/glucose cotransporter 1 (SLC5A1).